The following is a 338-amino-acid chain: 1-aminocyclopropane-1-carboxylate deaminase (338 aa).

The residue at position 51 (Lys-51) is an N6-(pyridoxal phosphate)lysine. The active-site Nucleophile is Ser-78.

This sequence belongs to the ACC deaminase/D-cysteine desulfhydrase family. Homotrimer. Pyridoxal 5'-phosphate serves as cofactor.

The catalysed reaction is 1-aminocyclopropane-1-carboxylate + H2O = 2-oxobutanoate + NH4(+). Catalyzes a cyclopropane ring-opening reaction, the irreversible conversion of 1-aminocyclopropane-1-carboxylate (ACC) to ammonia and alpha-ketobutyrate. Allows growth on ACC as a nitrogen source. The sequence is that of 1-aminocyclopropane-1-carboxylate deaminase from Burkholderia ambifaria (strain MC40-6).